A 251-amino-acid polypeptide reads, in one-letter code: MLKKAVGIVIRRVAYGDNHLIITFLNEAGVKVALMARNARKSTKYGSGLDLFYENLFIFSQFKGMGTLSSVDTINSHYEIREDIYVMTYAQYVVELIDRALEEDETNPYAYQLLKVALTHMERSDKARLIALLVSIKCMPLYGYVPNFKYSTYDGNMTHKDFIAYSFQFNSVVTQEALIEDPHAIPMTNKSLYMLYLLSEVPIESLSSINIEQSLIDEMETLVYKMYDEFIGVFIKSRKILEQMRRLDNYK.

This sequence belongs to the RecO family.

Functionally, involved in DNA repair and RecF pathway recombination. The polypeptide is DNA repair protein RecO (Macrococcus caseolyticus (strain JCSC5402) (Macrococcoides caseolyticum)).